Consider the following 154-residue polypeptide: Deoxyuridine 5'-triphosphate nucleotidohydrolase (154 aa).

Residues 70-72 (RSG), Asn83, 87-89 (LID), and Met97 each bind substrate.

This sequence belongs to the dUTPase family. The cofactor is Mg(2+).

The catalysed reaction is dUTP + H2O = dUMP + diphosphate + H(+). It functions in the pathway pyrimidine metabolism; dUMP biosynthesis; dUMP from dCTP (dUTP route): step 2/2. Its function is as follows. This enzyme is involved in nucleotide metabolism: it produces dUMP, the immediate precursor of thymidine nucleotides and it decreases the intracellular concentration of dUTP so that uracil cannot be incorporated into DNA. The sequence is that of Deoxyuridine 5'-triphosphate nucleotidohydrolase from Buchnera aphidicola subsp. Acyrthosiphon pisum (strain 5A).